Consider the following 252-residue polypeptide: NLP effector protein Pc118356 (252 aa).

The signal sequence occupies residues 1 to 17 (MALTVLAATALTALIMG). N-linked (GlcNAc...) asparagine glycans are attached at residues Asn-20 and Asn-67. Positions 121 to 127 (QDRHFWE) match the Hepta-peptide GHRHDWE motif motif. Asn-166 is a glycosylation site (N-linked (GlcNAc...) asparagine).

The protein belongs to the Necrosis inducing protein (NPP1) family.

It localises to the secreted. Functionally, secreted effector that contributes strongly to virulence during infection by P.capsici. This is NLP effector protein Pc118356 from Phytophthora capsici.